Reading from the N-terminus, the 261-residue chain is MAAAAAAAAAAGDSDSWDADTFSMEDPVRKVAGGGTAGGDRWEGEDEDEDVKDNWDDDDDENKEEAEVKPEVKISEKKKIAEKIKEKERQQKKRQEEIKKRLEEPEESKVLTPEEQLADKLRLKKLQEESDLELAKETFGVNNTVYGIDAMNPSSRDDFTEFGKLLKDKITQYEKSLYYASFLEALVRDVCISLEIDDLKKITNSLTVLCSEKQKQEKQSKAKKKKKGVVPGGGLKATMKDDLADYGGYEGGYVQDYEDFM.

Low complexity predominate over residues 1–11 (MAAAAAAAAAA). Positions 1-113 (MAAAAAAAAA…EPEESKVLTP (113 aa)) are disordered. Residues 4–72 (AAAAAAAAGD…KEEAEVKPEV (69 aa)) are sufficient for interaction with EIF3B. 3 positions are modified to phosphoserine: Ser-14, Ser-16, and Ser-23. Positions 43–64 (EGEDEDEDVKDNWDDDDDENKE) are enriched in acidic residues. A compositionally biased stretch (basic and acidic residues) spans 65 to 109 (EAEVKPEVKISEKKKIAEKIKEKERQQKKRQEEIKKRLEEPEESK). Residues 73 to 138 (KISEKKKIAE…ESDLELAKET (66 aa)) adopt a coiled-coil conformation. Residue Lys-109 forms a Glycyl lysine isopeptide (Lys-Gly) (interchain with G-Cter in SUMO2) linkage. Thr-112 bears the Phosphothreonine mark. Ser-130 bears the Phosphoserine mark. The promotes stable association with the 40S ribosome stretch occupies residues 246–261 (YGGYEGGYVQDYEDFM). A Phosphotyrosine modification is found at Tyr-257.

This sequence belongs to the eIF-3 subunit J family. As to quaternary structure, component of the eukaryotic translation initiation factor 3 (eIF-3) complex, which is composed of 13 subunits: EIF3A, EIF3B, EIF3C, EIF3D, EIF3E, EIF3F, EIF3G, EIF3H, EIF3I, EIF3J, EIF3K, EIF3L and EIF3M. The eIF-3 complex appears to include 3 stable modules: module A is composed of EIF3A, EIF3B, EIF3G and EIF3I; module B is composed of EIF3F, EIF3H, and EIF3M; and module C is composed of EIF3C, EIF3D, EIF3E, EIF3K and EIF3L. EIF3C of module C binds EIF3B of module A and EIF3H of module B, thereby linking the three modules. EIF3J is a labile subunit that binds to the eIF-3 complex via EIF3B. The eIF-3 complex interacts with RPS6KB1 under conditions of nutrient depletion. Mitogenic stimulation leads to binding and activation of a complex composed of MTOR and RPTOR, leading to phosphorylation and release of RPS6KB1 and binding of EIF4B to eIF-3. Phosphorylated. Phosphorylation is enhanced upon serum stimulation.

It localises to the cytoplasm. Functionally, component of the eukaryotic translation initiation factor 3 (eIF-3) complex, which is required for several steps in the initiation of protein synthesis. The eIF-3 complex associates with the 40S ribosome and facilitates the recruitment of eIF-1, eIF-1A, eIF-2:GTP:methionyl-tRNAi and eIF-5 to form the 43S pre-initiation complex (43S PIC). The eIF-3 complex stimulates mRNA recruitment to the 43S PIC and scanning of the mRNA for AUG recognition. The eIF-3 complex is also required for disassembly and recycling of post-termination ribosomal complexes and subsequently prevents premature joining of the 40S and 60S ribosomal subunits prior to initiation. The eIF-3 complex specifically targets and initiates translation of a subset of mRNAs involved in cell proliferation, including cell cycling, differentiation and apoptosis, and uses different modes of RNA stem-loop binding to exert either translational activation or repression. This subunit binds directly within the mRNA entry channel of the 40S ribosome to the aminoacyl (A) site. It may regulate the interaction between the 43S PIC and mRNA. In Mus musculus (Mouse), this protein is Eukaryotic translation initiation factor 3 subunit J-A (Eif3j1).